We begin with the raw amino-acid sequence, 367 residues long: Germination protease (367 aa).

The propeptide occupies 1–13 (MEEQQIPFQVRTD). Residues 267 to 287 (KDDPSKSLTPAGMSFGNRKLT) form a disordered region.

The protein belongs to the peptidase A25 family. Homotetramer. Post-translationally, autoproteolytically processed. The inactive tetrameric zymogen termed p46 autoprocesses to a smaller form termed p41, which is active only during spore germination.

It carries out the reaction Endopeptidase action with P4 Glu or Asp, P1 preferably Glu &gt; Asp, P1' hydrophobic and P2' Ala.. Its function is as follows. Initiates the rapid degradation of small, acid-soluble proteins during spore germination. In Oceanobacillus iheyensis (strain DSM 14371 / CIP 107618 / JCM 11309 / KCTC 3954 / HTE831), this protein is Germination protease.